The primary structure comprises 262 residues: Nurim (262 aa).

Topologically, residues 1 to 4 (MAPA) are nuclear. The chain crosses the membrane as a helical span at residues 5 to 28 (LLLIPAALASFILAFGTGVEFVRF). The Perinuclear space segment spans residues 29 to 58 (TSLRPLLGRISESGSPDARQGWLAALQDQS). The helical transmembrane segment at 59–80 (ILVPLVWDLGLLLLFVGQHSLM) threads the bilayer. Residues 81 to 97 (ATETVKEWMSRYFGVLQ) are Nuclear-facing. The helical transmembrane segment at 98–114 (RSLYVACTALALQLVMR) threads the bilayer. Residues 115–133 (YWEPVPRGPVLWETRTEPW) lie on the Perinuclear space side of the membrane. A helical transmembrane segment spans residues 134 to 164 (ATWVPLLCFVLHVISWLLIFSILLVFDYAEL). Residues 165-191 (MGLKQVYYHVLGLGEPLALKSPRALRL) lie on the Nuclear side of the membrane. A helical transmembrane segment spans residues 192–210 (FSHLRHPVCVELLTVLWVV). Residues 211–216 (PTLGTD) lie on the Perinuclear space side of the membrane. The helical transmembrane segment at 217-234 (RLLLALLLTLYLGLAHGL) threads the bilayer. Topologically, residues 235–262 (DQHDLRYLRAQLQRKLHLLSRPQDGEAE) are nuclear.

The protein belongs to the nurim family.

Its subcellular location is the nucleus inner membrane. This chain is Nurim (NRM), found in Bos taurus (Bovine).